We begin with the raw amino-acid sequence, 1049 residues long: Probable disease resistance protein RF9 (1049 aa).

The stretch at 25–41 (QGVEDQVTELKRDLNLL) forms a coiled coil. Residues 139-158 (GYKQPQGDKQREMRPRFSKD) form a disordered region. Residues 144-158 (QGDKQREMRPRFSKD) show a composition bias toward basic and acidic residues. Positions 147–460 (KQREMRPRFS…AEGIFQPRHY (314 aa)) constitute an NB-ARC domain. 190–197 (GMGGLGKT) is an ATP binding site. 10 LRR repeats span residues 584-608 (LELL…SIGQ), 609-634 (LIHL…NLKL), 657-682 (MQQL…NLVK), 683-707 (LETL…RLRT), 776-799 (PSHL…ILEK), 800-827 (LHQL…GFPQ), 849-873 (MPVL…HLPS), 896-923 (LVHL…GFPQ), 945-968 (MPQL…GFPQ), and 990-1015 (MPLL…RFIY).

It belongs to the disease resistance NB-LRR family.

Potential disease resistance protein. The protein is Probable disease resistance protein RF9 (RF9) of Arabidopsis thaliana (Mouse-ear cress).